A 426-amino-acid polypeptide reads, in one-letter code: G2/mitotic-specific cyclin-A (426 aa).

Residues 1–11 are compositionally biased toward polar residues; the sequence is MSMVHGSSFQI. Positions 1–22 are disordered; sequence MSMVHGSSFQIAQDGENENQGV.

Belongs to the cyclin family. Cyclin AB subfamily.

Its function is as follows. Essential for the control of the cell cycle at the G2/M (mitosis) transition. Interacts with the CDC2 and CDK2 protein kinases to form MPF. G2/M cyclins accumulate steadily during G2 and are abruptly destroyed at mitosis. The polypeptide is G2/mitotic-specific cyclin-A (Patella vulgata (Common limpet)).